The sequence spans 554 residues: Glucose-6-phosphate isomerase (554 aa).

E359 serves as the catalytic Proton donor. Catalysis depends on residues H390 and K518.

The protein belongs to the GPI family.

The protein resides in the cytoplasm. The catalysed reaction is alpha-D-glucose 6-phosphate = beta-D-fructose 6-phosphate. The protein operates within carbohydrate biosynthesis; gluconeogenesis. It functions in the pathway carbohydrate degradation; glycolysis; D-glyceraldehyde 3-phosphate and glycerone phosphate from D-glucose: step 2/4. Functionally, catalyzes the reversible isomerization of glucose-6-phosphate to fructose-6-phosphate. The chain is Glucose-6-phosphate isomerase from Pseudomonas putida (strain GB-1).